The sequence spans 639 residues: MSIASVKTPSSLREAQIQSLEKLLNLNQDVNELESSPQHASNFPIWKVLIFDKAGSETISSVLRISDLRKHGVTVHMNITSFRQPIADVPAIYFVQPTQENIELIIEDLSKGLYESAYVCFSSTISRALLEQFAELASKTNTSHMIHQVYDQYLNYVVLESDFFSLQLPKIFHTFHNPSSDEALINSRVQDIVNGLFSVIVTLGTIPIIRCPQGSAAEMVAQKLNQRLKDHLMNTKDAFVSVNPKPRPILILLDRTVDLIPMINHSWTYQALIHDTLNMQLNRITVESVDDGKMTKRFYDLDGNDFFWESNASKPFPKVAENIDEELTRYKNDASEITRKSGVSSLEEVNVDAFADSTYLKSAVSLLPELTARKQILDMHMNIATALLKAIQERHLDDFFQLEDNITGLNRSAILACINNKEQGTPEDKLRFFIIWYLSVDSVPASDLQAYEEALVNNGCTLEALNFVKRVREITKMTMLASSTTRPATGQTGDNLFRGFSSLSTRFTDRFKEAGIGGLENIISGVRNLIPFRKDGTITSIVQSLMDPGSSPASKQTESYLLLDPKSARAITVNNDPRAMNKRQTFSEAIVCVLGGGNYLEYGNLADWAREQNPKKRIIYGSTDILSPSEFMEEMASLS.

Belongs to the STXBP/unc-18/SEC1 family.

It localises to the cytoplasm. This chain is Protein sly1 (sly1), found in Schizosaccharomyces pombe (strain 972 / ATCC 24843) (Fission yeast).